We begin with the raw amino-acid sequence, 170 residues long: Odorant-binding protein 2a (170 aa).

The N-terminal stretch at 1-15 is a signal peptide; it reads MKTLFLGVTLGLAAA. Residues Cys-74 and Cys-166 are joined by a disulfide bond.

This sequence belongs to the calycin superfamily. Lipocalin family. In terms of assembly, monomer. Strongly expressed in the nasal structures, salivary and lachrymal glands, and lung. Expressed in the liver.

The protein resides in the secreted. Its function is as follows. Binds and transports small hydrophobic volatile molecules with a higher affinity for aldehydes and large fatty acids, including undecanal, palmitic acid, efficient aldehydes, benzenic aldehydes, heterocyclic aldehydes and aliphatic acids. The protein is Odorant-binding protein 2a (OBP2A) of Homo sapiens (Human).